Here is a 67-residue protein sequence, read N- to C-terminus: Probable Sec-independent protein translocase protein TatE (67 aa).

Residues 4–21 form a helical membrane-spanning segment; it reads ISITKLLVVAALVVLLFG.

Belongs to the TatA/E family. TatE subfamily.

Its subcellular location is the cell inner membrane. In terms of biological role, part of the twin-arginine translocation (Tat) system that transports large folded proteins containing a characteristic twin-arginine motif in their signal peptide across membranes. TatE shares overlapping functions with TatA. This is Probable Sec-independent protein translocase protein TatE from Shigella flexneri.